A 369-amino-acid chain; its full sequence is MAYHSFLLEPITCHAWNKDATQIAFCPNSHDVHIYKKDGDKWSKIHELKEHNGHVTGIDWAPESNRIVTCGTDRNAYVWTLKNNVWKPTLVILRINRAARCVKWSPKENKFAVGSGSRLISICYFEQENDWWVCKHIKKPIRSTVLSLDWHPNNVLLAAGSSDFKSRIFSAYIKEVEERPAPTPWGSKMPFGELMFESSSSCGWVHSVCFSHSGDRMAWVSHDSTICISDATKKMRVTSLITDTLPLLCVTFITENSLVAAGHDCFPVLYIYDEAQGTLSFGGKLDIPKQSSQRGMTARERFQNLDKKASSDTNNITLDSLHKNSISQLSVLSGGKAKCSKFCTTGLDGGMCIWDVKSLESAMKDLKIK.

WD repeat units lie at residues 6–45, 50–89, 94–135, 140–179, 200–239, 242–282, and 321–364; these read FLLE…WSKI, EHNG…WKPT, RINR…WVCK, PIRS…VEER, SSCG…RVTS, TDTL…LSFG, and LHKN…SAMK.

The protein belongs to the WD repeat ARPC1 family. As to quaternary structure, component of the Arp2/3 complex composed of actr2/arp2, actr3/arp3, arpc1 (arpc1a or arpc1b), arpc2, arpc3, arpc4 and arpc5.

It is found in the cytoplasm. Its subcellular location is the cytoskeleton. It localises to the nucleus. In terms of biological role, component of the Arp2/3 complex, a multiprotein complex that mediates actin polymerization upon stimulation by nucleation-promoting factor (NPF). The Arp2/3 complex mediates the formation of branched actin networks in the cytoplasm, providing the force for cell motility. In addition to its role in the cytoplasmic cytoskeleton, the Arp2/3 complex also promotes actin polymerization in the nucleus, thereby regulating gene transcription and repair of damaged DNA. The Arp2/3 complex promotes homologous recombination (HR) repair in response to DNA damage by promoting nuclear actin polymerization, leading to drive motility of double-strand breaks (DSBs). In Xenopus laevis (African clawed frog), this protein is Actin-related protein 2/3 complex subunit 1B-A (arpc1b-a).